Here is a 121-residue protein sequence, read N- to C-terminus: Ribosome-binding factor A (121 aa).

It belongs to the RbfA family. Monomer. Binds 30S ribosomal subunits, but not 50S ribosomal subunits or 70S ribosomes.

It is found in the cytoplasm. Functionally, one of several proteins that assist in the late maturation steps of the functional core of the 30S ribosomal subunit. Associates with free 30S ribosomal subunits (but not with 30S subunits that are part of 70S ribosomes or polysomes). Required for efficient processing of 16S rRNA. May interact with the 5'-terminal helix region of 16S rRNA. This chain is Ribosome-binding factor A, found in Agathobacter rectalis (strain ATCC 33656 / DSM 3377 / JCM 17463 / KCTC 5835 / VPI 0990) (Eubacterium rectale).